The primary structure comprises 313 residues: Ribosomal protein L11 methyltransferase (313 aa).

4 residues coordinate S-adenosyl-L-methionine: T161, G182, D204, and N246.

This sequence belongs to the methyltransferase superfamily. PrmA family.

The protein resides in the cytoplasm. The enzyme catalyses L-lysyl-[protein] + 3 S-adenosyl-L-methionine = N(6),N(6),N(6)-trimethyl-L-lysyl-[protein] + 3 S-adenosyl-L-homocysteine + 3 H(+). Functionally, methylates ribosomal protein L11. This Acetivibrio thermocellus (strain ATCC 27405 / DSM 1237 / JCM 9322 / NBRC 103400 / NCIMB 10682 / NRRL B-4536 / VPI 7372) (Clostridium thermocellum) protein is Ribosomal protein L11 methyltransferase.